We begin with the raw amino-acid sequence, 254 residues long: Imidazole glycerol phosphate synthase subunit HisF (254 aa).

Residues aspartate 12 and aspartate 131 contribute to the active site.

Belongs to the HisA/HisF family. Heterodimer of HisH and HisF.

It is found in the cytoplasm. It catalyses the reaction 5-[(5-phospho-1-deoxy-D-ribulos-1-ylimino)methylamino]-1-(5-phospho-beta-D-ribosyl)imidazole-4-carboxamide + L-glutamine = D-erythro-1-(imidazol-4-yl)glycerol 3-phosphate + 5-amino-1-(5-phospho-beta-D-ribosyl)imidazole-4-carboxamide + L-glutamate + H(+). It functions in the pathway amino-acid biosynthesis; L-histidine biosynthesis; L-histidine from 5-phospho-alpha-D-ribose 1-diphosphate: step 5/9. Functionally, IGPS catalyzes the conversion of PRFAR and glutamine to IGP, AICAR and glutamate. The HisF subunit catalyzes the cyclization activity that produces IGP and AICAR from PRFAR using the ammonia provided by the HisH subunit. This chain is Imidazole glycerol phosphate synthase subunit HisF, found in Frankia casuarinae (strain DSM 45818 / CECT 9043 / HFP020203 / CcI3).